We begin with the raw amino-acid sequence, 398 residues long: 1-deoxy-D-xylulose 5-phosphate reductoisomerase (398 aa).

Residues T10, G11, S12, I13, N38, and N124 each contribute to the NADPH site. Position 125 (K125) interacts with 1-deoxy-D-xylulose 5-phosphate. E126 contacts NADPH. D150 is a Mn(2+) binding site. Positions 151, 152, 176, and 199 each coordinate 1-deoxy-D-xylulose 5-phosphate. E152 contacts Mn(2+). G205 serves as a coordination point for NADPH. 1-deoxy-D-xylulose 5-phosphate contacts are provided by S212, N217, K218, and E221. Residue E221 coordinates Mn(2+).

It belongs to the DXR family. Requires Mg(2+) as cofactor. The cofactor is Mn(2+).

The catalysed reaction is 2-C-methyl-D-erythritol 4-phosphate + NADP(+) = 1-deoxy-D-xylulose 5-phosphate + NADPH + H(+). The protein operates within isoprenoid biosynthesis; isopentenyl diphosphate biosynthesis via DXP pathway; isopentenyl diphosphate from 1-deoxy-D-xylulose 5-phosphate: step 1/6. Catalyzes the NADPH-dependent rearrangement and reduction of 1-deoxy-D-xylulose-5-phosphate (DXP) to 2-C-methyl-D-erythritol 4-phosphate (MEP). The chain is 1-deoxy-D-xylulose 5-phosphate reductoisomerase from Rippkaea orientalis (strain PCC 8801 / RF-1) (Cyanothece sp. (strain PCC 8801)).